Here is a 364-residue protein sequence, read N- to C-terminus: D-alanine--D-alanine ligase A (364 aa).

The ATP-grasp domain maps to Lys145–Glu348. Glu175–Glu230 contributes to the ATP binding site. 3 residues coordinate Mg(2+): Asp302, Glu315, and Asn317.

The protein belongs to the D-alanine--D-alanine ligase family. Requires Mg(2+) as cofactor. The cofactor is Mn(2+).

The protein localises to the cytoplasm. It catalyses the reaction 2 D-alanine + ATP = D-alanyl-D-alanine + ADP + phosphate + H(+). It functions in the pathway cell wall biogenesis; peptidoglycan biosynthesis. Functionally, cell wall formation. This chain is D-alanine--D-alanine ligase A, found in Escherichia coli O6:H1 (strain CFT073 / ATCC 700928 / UPEC).